We begin with the raw amino-acid sequence, 277 residues long: Ribosomal RNA small subunit methyltransferase A (277 aa).

Positions 27, 29, 54, 75, 95, and 118 each coordinate S-adenosyl-L-methionine.

Belongs to the class I-like SAM-binding methyltransferase superfamily. rRNA adenine N(6)-methyltransferase family. RsmA subfamily.

The protein localises to the cytoplasm. It catalyses the reaction adenosine(1518)/adenosine(1519) in 16S rRNA + 4 S-adenosyl-L-methionine = N(6)-dimethyladenosine(1518)/N(6)-dimethyladenosine(1519) in 16S rRNA + 4 S-adenosyl-L-homocysteine + 4 H(+). Its function is as follows. Specifically dimethylates two adjacent adenosines (A1518 and A1519) in the loop of a conserved hairpin near the 3'-end of 16S rRNA in the 30S particle. May play a critical role in biogenesis of 30S subunits. The chain is Ribosomal RNA small subunit methyltransferase A from Chlamydia muridarum (strain MoPn / Nigg).